The chain runs to 347 residues: E3 ubiquitin-protein ligase ARK2C (347 aa).

2 disordered regions span residues 23-79 and 268-289; these read PFQR…GTLH and PHKY…GEES. The tract at residues 267 to 269 is ubiquitin binding; it reads FPH. A compositionally biased stretch (basic and acidic residues) spans 276-285; it reads PQDSKGKKDE. Cys295 and Cys298 together coordinate Zn(2+). The RING-type; atypical zinc finger occupies 295-336; it reads CTICLSMLEDGEDVRRLPCMHLFHQLCVDQWLAMSKKCPICR. Residues 310-314 are ubiquitin binding; that stretch reads RLPCM. His318 and Cys321 together coordinate Zn(2+).

The protein belongs to the Arkadia family. In terms of assembly, monomer; binding to the ubiquitin-conjugating enzyme E2 does not trigger homodimerization. In terms of tissue distribution, expressed in neurons of the nervous system.

It localises to the nucleus. The enzyme catalyses S-ubiquitinyl-[E2 ubiquitin-conjugating enzyme]-L-cysteine + [acceptor protein]-L-lysine = [E2 ubiquitin-conjugating enzyme]-L-cysteine + N(6)-ubiquitinyl-[acceptor protein]-L-lysine.. With respect to regulation, binds free ubiquitin non-covalently via its RING-type zinc finger. Ubiquitin-binding leads to enhance the E3 ubiquitin-protein ligase activity by stabilizing the ubiquitin-conjugating enzyme E2 (donor ubiquitin) in the 'closed' conformation and activating ubiquitin transfer. Its function is as follows. E3 ubiquitin-protein ligase that acts as a regulator of motor axon elongation. Required for efficient motor axon extension in the dorsal forelimb by enhancing the transcriptional responses of the SMAD1/SMAD5/SMAD8 effectors, which are activated downstream of BMP. Acts by mediating ubiquitination and degradation of SMAD inhibitors such as SMAD6, SMAD7, SKI and SNON isoform of SKIL. The polypeptide is E3 ubiquitin-protein ligase ARK2C (Mus musculus (Mouse)).